The sequence spans 35 residues: Cupiennin-2d (35 aa).

Q35 is modified (glutamine amide).

Expressed by the venom gland.

The protein resides in the secreted. In Cupiennius salei (American wandering spider), this protein is Cupiennin-2d.